The following is a 196-amino-acid chain: MAEQARTATVKRTTKETDITVTLTLDGNGTSAIASGVVFLDHMLTNFCKHAGFNLTLRCNGDLDVDDHHSVEDVALVLGTAITEALGNKSGIQRYGWAIIPMDEALARCAVDLGGRSYCVFKAEFRRPVIQGLSTEMVEHFFRSLADTMKATLHLEVLDGNNTHHKIEALFKAFAYAMKAAVSITGNDIPSTKGLI.

This sequence belongs to the imidazoleglycerol-phosphate dehydratase family.

The protein resides in the cytoplasm. It carries out the reaction D-erythro-1-(imidazol-4-yl)glycerol 3-phosphate = 3-(imidazol-4-yl)-2-oxopropyl phosphate + H2O. It functions in the pathway amino-acid biosynthesis; L-histidine biosynthesis; L-histidine from 5-phospho-alpha-D-ribose 1-diphosphate: step 6/9. The protein is Imidazoleglycerol-phosphate dehydratase of Chlorobium chlorochromatii (strain CaD3).